Reading from the N-terminus, the 533-residue chain is Probable lipid II flippase MurJ (533 aa).

A run of 14 helical transmembrane segments spans residues 11-31 (LANIAGIVAIATLISKVFGLL), 39-61 (AFGVGTVVTAYAYAYVIPGFLFI), 96-116 (LVSGVLLGVTIILVLGAGIFI), 135-155 (LQIMAPMALLSGLIGIGFGTL), 166-186 (ISPLLSSITVILGLGVAVWQL), 196-216 (WLLGSLLLAGGTTAGAVLQWL), 253-273 (LSSGMLYINFATNLFFASFIP), 284-304 (FVALTPLGIISNMILVPFLPV), 330-350 (LTMFPLTAILVGLAIPIVQVI), 360-380 (AAAEVAPVLAAYGLGMFFYLG), 400-420 (VSLFNIFLNGLLDYLFYKPFG), 422-442 (VGIVMATVGVNLFSMTIFIWM), 452-472 (LGGWAMDLGKLVGVTAIASVA), and 493-513 (ILEVLTMSSIILVVFTVGVAL).

This sequence belongs to the MurJ/MviN family.

It localises to the cell inner membrane. It functions in the pathway cell wall biogenesis; peptidoglycan biosynthesis. Its function is as follows. Involved in peptidoglycan biosynthesis. Transports lipid-linked peptidoglycan precursors from the inner to the outer leaflet of the cytoplasmic membrane. In Synechocystis sp. (strain ATCC 27184 / PCC 6803 / Kazusa), this protein is Probable lipid II flippase MurJ.